Here is a 169-residue protein sequence, read N- to C-terminus: MTVRDVRIFGDPVLTSRADEVVDFDESLATLIDDMFDTMEDAGGVGLAANQVGVLRRVFVFDCSHVDGGLRGHVVNPVWEPIGEETQTGKEGCLSIPDVSAETTRYETVKLSGQDRDGNPIGLVASGLLSRCIQHETDHLDGVLFLKRLDPAERKAAMGVIRASDWFNK.

Fe cation contacts are provided by C93 and H135. E136 is a catalytic residue. Fe cation is bound at residue H139.

It belongs to the polypeptide deformylase family. It depends on Fe(2+) as a cofactor.

The catalysed reaction is N-terminal N-formyl-L-methionyl-[peptide] + H2O = N-terminal L-methionyl-[peptide] + formate. Functionally, removes the formyl group from the N-terminal Met of newly synthesized proteins. Requires at least a dipeptide for an efficient rate of reaction. N-terminal L-methionine is a prerequisite for activity but the enzyme has broad specificity at other positions. This is Peptide deformylase 1 from Corynebacterium efficiens (strain DSM 44549 / YS-314 / AJ 12310 / JCM 11189 / NBRC 100395).